The primary structure comprises 185 residues: Large ribosomal subunit protein uL5 (185 aa).

Belongs to the universal ribosomal protein uL5 family. As to quaternary structure, part of the 50S ribosomal subunit; part of the 5S rRNA/L5/L18/L25 subcomplex. Contacts the 5S rRNA and the P site tRNA. Forms a bridge to the 30S subunit in the 70S ribosome.

Its function is as follows. This is one of the proteins that bind and probably mediate the attachment of the 5S RNA into the large ribosomal subunit, where it forms part of the central protuberance. In the 70S ribosome it contacts protein S13 of the 30S subunit (bridge B1b), connecting the 2 subunits; this bridge is implicated in subunit movement. Contacts the P site tRNA; the 5S rRNA and some of its associated proteins might help stabilize positioning of ribosome-bound tRNAs. The protein is Large ribosomal subunit protein uL5 of Rhodopseudomonas palustris (strain BisB18).